We begin with the raw amino-acid sequence, 100 residues long: ESAT-6-like protein EsxT (100 aa).

Belongs to the WXG100 family. ESAT-6 subfamily. In terms of assembly, forms a tight 1:1 complex with EsxU.

Its subcellular location is the secreted. The polypeptide is ESAT-6-like protein EsxT (Mycobacterium tuberculosis (strain CDC 1551 / Oshkosh)).